We begin with the raw amino-acid sequence, 604 residues long: NADPH oxidase activator (604 aa).

2 TPR repeats span residues 36–69 (SKIN…DKYL) and 71–103 (SSYY…LRGH). 2 disordered regions span residues 180–298 (FKPP…KLPS) and 383–581 (DIIP…PYQV). Composition is skewed to low complexity over residues 194-215 (SATT…SPPS) and 225-243 (PSSS…SSSP). The segment covering 244 to 260 (KLPPTPKPSFGSSPPPS) has biased composition (pro residues). Positions 261-284 (SSSSSSSSSSSSSSSISPLTNKTL) are enriched in low complexity. The PB1 domain occupies 309 to 384 (KITLKVFYKD…EINEINVKDI (76 aa)). 3 stretches are compositionally biased toward low complexity: residues 396–424 (PDKT…SSSS), 435–453 (PKTT…TTST), and 467–483 (FGST…SSSS). The segment covering 502–528 (LLKQQNQTQSINIPPKVPTSSRPKMTQ) has biased composition (polar residues). Residues 529–570 (SHSPPSSSPLSSYSTSFQSVSSPSLSSSYNGSTSSYGGFSSS) show a composition bias toward low complexity. Residues 573–604 (PPTPYPYQVLYTDSNEKYYLNTETNETFWELP) enclose the WW domain.

Functionally, may function as an activator of NOX1, a superoxide-producing NADPH oxidase. In Dictyostelium discoideum (Social amoeba), this protein is NADPH oxidase activator (ncfA).